Reading from the N-terminus, the 217-residue chain is tRNA (guanine-N(7)-)-methyltransferase (217 aa).

S-adenosyl-L-methionine contacts are provided by Glu44, Glu69, Asp96, and Asp118. Residue Asp118 is part of the active site. Residues Lys122, Asp154, and Thr191–Glu194 contribute to the substrate site.

It belongs to the class I-like SAM-binding methyltransferase superfamily. TrmB family.

It catalyses the reaction guanosine(46) in tRNA + S-adenosyl-L-methionine = N(7)-methylguanosine(46) in tRNA + S-adenosyl-L-homocysteine. It participates in tRNA modification; N(7)-methylguanine-tRNA biosynthesis. Catalyzes the formation of N(7)-methylguanine at position 46 (m7G46) in tRNA. The protein is tRNA (guanine-N(7)-)-methyltransferase of Bacillus cereus (strain B4264).